A 347-amino-acid polypeptide reads, in one-letter code: Nicotinate-nucleotide--dimethylbenzimidazole phosphoribosyltransferase (347 aa).

The active-site Proton acceptor is Glu-316.

The protein belongs to the CobT family.

It carries out the reaction 5,6-dimethylbenzimidazole + nicotinate beta-D-ribonucleotide = alpha-ribazole 5'-phosphate + nicotinate + H(+). It participates in nucleoside biosynthesis; alpha-ribazole biosynthesis; alpha-ribazole from 5,6-dimethylbenzimidazole: step 1/2. In terms of biological role, catalyzes the synthesis of alpha-ribazole-5'-phosphate from nicotinate mononucleotide (NAMN) and 5,6-dimethylbenzimidazole (DMB). In Vibrio campbellii (strain ATCC BAA-1116), this protein is Nicotinate-nucleotide--dimethylbenzimidazole phosphoribosyltransferase.